The following is a 258-amino-acid chain: Type III pantothenate kinase (258 aa).

6–13 (DVGNTNTV) provides a ligand contact to ATP. Substrate is bound by residues Y100 and 107–110 (GADR). Residue D109 is the Proton acceptor of the active site. D129 is a binding site for K(+). Residue T132 participates in ATP binding. Position 184 (T184) interacts with substrate.

It belongs to the type III pantothenate kinase family. As to quaternary structure, homodimer. NH4(+) is required as a cofactor. Requires K(+) as cofactor.

Its subcellular location is the cytoplasm. It carries out the reaction (R)-pantothenate + ATP = (R)-4'-phosphopantothenate + ADP + H(+). Its pathway is cofactor biosynthesis; coenzyme A biosynthesis; CoA from (R)-pantothenate: step 1/5. Its activity is regulated as follows. Not regulated by feedback inhibition by CoA and its thioesters as described for many other pantothenate kinases. Not inhibited by N-pentylpantothenamide (N5-Pan), and this compound cannot act as a substrate either. In terms of biological role, catalyzes the phosphorylation of pantothenate (Pan), the first step in CoA biosynthesis. Cannot utilize a phosphoryl donor other than ATP. In Bacillus subtilis (strain 168), this protein is Type III pantothenate kinase (coaX).